The chain runs to 261 residues: Kallikrein 1-related peptidase b16 (261 aa).

The N-terminal stretch at Met-1 to Ala-18 is a signal peptide. Positions Pro-19 to Arg-24 are cleaved as a propeptide — activation peptide. A Peptidase S1 domain is found at Ile-25 to Met-258. 5 disulfides stabilise this stretch: Cys-31/Cys-173, Cys-50/Cys-66, Cys-152/Cys-219, Cys-184/Cys-198, and Cys-209/Cys-234. The Charge relay system role is filled by His-65. A glycan (N-linked (GlcNAc...) asparagine) is linked at Asn-102. The Charge relay system role is filled by Asp-120. Catalysis depends on Ser-213, which acts as the Charge relay system.

It belongs to the peptidase S1 family. Kallikrein subfamily.

The catalysed reaction is Cleavage of the Leu-|-Leu bond in synthetic tetradecapeptide renin substrate, to produce angiotensin I, but not active on natural angiotensinogen. Also hydrolyzes Bz-Arg-p-nitroanilide.. The protein is Kallikrein 1-related peptidase b16 (Klk1b16) of Mus musculus (Mouse).